The following is a 254-amino-acid chain: Pimeloyl-[acyl-carrier protein] methyl ester esterase (254 aa).

Positions 16 to 242 (LVLIHGWGMN…ASHAPFISHP (227 aa)) constitute an AB hydrolase-1 domain. Substrate-binding positions include W22, 82 to 83 (SL), and 143 to 147 (FLALQ). S82 serves as the catalytic Nucleophile. Active-site residues include D207 and H235. H235 contacts substrate.

This sequence belongs to the AB hydrolase superfamily. Carboxylesterase BioH family. Monomer.

Its subcellular location is the cytoplasm. It catalyses the reaction 6-carboxyhexanoyl-[ACP] methyl ester + H2O = 6-carboxyhexanoyl-[ACP] + methanol + H(+). Its pathway is cofactor biosynthesis; biotin biosynthesis. Its function is as follows. The physiological role of BioH is to remove the methyl group introduced by BioC when the pimeloyl moiety is complete. It allows to synthesize pimeloyl-ACP via the fatty acid synthetic pathway through the hydrolysis of the ester bonds of pimeloyl-ACP esters. This Photobacterium profundum (strain SS9) protein is Pimeloyl-[acyl-carrier protein] methyl ester esterase.